A 735-amino-acid chain; its full sequence is Type-3 glutamine synthetase (735 aa).

One can recognise a GS beta-grasp domain in the interval 89–183 (THYCHWFLPL…IPTAFCSWTG (95 aa)). A GS catalytic domain is found at 188-621 (QKTPLLRSME…SLYDLVSTLV (434 aa)).

This sequence belongs to the glutamine synthetase family. Type 3 subfamily. As to quaternary structure, homohexamer.

It carries out the reaction L-glutamate + NH4(+) + ATP = L-glutamine + ADP + phosphate + H(+). This is Type-3 glutamine synthetase (glnA3) from Dictyostelium discoideum (Social amoeba).